The chain runs to 105 residues: BLOC-1-related complex subunit 7 (105 aa).

It belongs to the BORCS7 family. In terms of assembly, component of the BLOC-one-related complex (BORC) which is composed of BLOC1S1, BLOC1S2, BORCS5, BORCS6, BORCS7, BORCS8, KXD1 and SNAPIN.

Its subcellular location is the lysosome membrane. Its function is as follows. As part of the BORC complex may play a role in lysosomes movement and localization at the cell periphery. Associated with the cytosolic face of lysosomes, the BORC complex may recruit ARL8B and couple lysosomes to microtubule plus-end-directed kinesin motor. The sequence is that of BLOC-1-related complex subunit 7 from Mus musculus (Mouse).